Consider the following 320-residue polypeptide: o-succinylbenzoate synthase (320 aa).

The active-site Proton donor is the Lys-133. Positions 161, 190, and 213 each coordinate Mg(2+). Lys-235 acts as the Proton acceptor in catalysis.

The protein belongs to the mandelate racemase/muconate lactonizing enzyme family. MenC type 1 subfamily. The cofactor is a divalent metal cation.

The enzyme catalyses (1R,6R)-6-hydroxy-2-succinyl-cyclohexa-2,4-diene-1-carboxylate = 2-succinylbenzoate + H2O. It functions in the pathway quinol/quinone metabolism; 1,4-dihydroxy-2-naphthoate biosynthesis; 1,4-dihydroxy-2-naphthoate from chorismate: step 4/7. Its pathway is quinol/quinone metabolism; menaquinone biosynthesis. Converts 2-succinyl-6-hydroxy-2,4-cyclohexadiene-1-carboxylate (SHCHC) to 2-succinylbenzoate (OSB). This Citrobacter koseri (strain ATCC BAA-895 / CDC 4225-83 / SGSC4696) protein is o-succinylbenzoate synthase.